The following is a 356-amino-acid chain: MKELVNILDFLPEELGEKIKPMFRVKQIYQWIYQKYANNFSDMSSLPKDLRLELAQNFHFSPVKCVKNEQSKDGSIKYLFELVDGLRIESVLLPMKEEKIDAEGKRISHARYTICVSSQVGCKSGCSFCLTAKGGLKRNLSAGEIVGQILWIKKQNNIPYERRINIVYMGMGEPLDNLKNVSKAVKILAQNEGLAISPRRQTISTSGLAKQIKELGQMNLGVLLAISLHAVNDELRTELMPINKAYNIAAIMDAVREFPIDQRKRVMFEYLLIDGINDKLEHAKELVKLLNGIKAKVNLILFNPHEGGLYKRPSLENAIKFQDLLSNKGVTCTIRESKGLDISAACGQLKERAKEQ.

E89 acts as the Proton acceptor in catalysis. A Radical SAM core domain is found at 108–341 (SHARYTICVS…CTIRESKGLD (234 aa)). C115 and C346 form a disulfide bridge. [4Fe-4S] cluster is bound by residues C122, C126, and C129. S-adenosyl-L-methionine is bound by residues 172 to 173 (GE), S204, 227 to 229 (SLH), and N303. Catalysis depends on C346, which acts as the S-methylcysteine intermediate.

It belongs to the radical SAM superfamily. RlmN family. Requires [4Fe-4S] cluster as cofactor.

It localises to the cytoplasm. The catalysed reaction is adenosine(2503) in 23S rRNA + 2 reduced [2Fe-2S]-[ferredoxin] + 2 S-adenosyl-L-methionine = 2-methyladenosine(2503) in 23S rRNA + 5'-deoxyadenosine + L-methionine + 2 oxidized [2Fe-2S]-[ferredoxin] + S-adenosyl-L-homocysteine. It catalyses the reaction adenosine(37) in tRNA + 2 reduced [2Fe-2S]-[ferredoxin] + 2 S-adenosyl-L-methionine = 2-methyladenosine(37) in tRNA + 5'-deoxyadenosine + L-methionine + 2 oxidized [2Fe-2S]-[ferredoxin] + S-adenosyl-L-homocysteine. Its function is as follows. Specifically methylates position 2 of adenine 2503 in 23S rRNA and position 2 of adenine 37 in tRNAs. m2A2503 modification seems to play a crucial role in the proofreading step occurring at the peptidyl transferase center and thus would serve to optimize ribosomal fidelity. The sequence is that of Dual-specificity RNA methyltransferase RlmN from Campylobacter jejuni (strain RM1221).